We begin with the raw amino-acid sequence, 227 residues long: Cytidylate kinase (227 aa).

ATP is bound at residue 7–15 (GPAGSGKST).

Belongs to the cytidylate kinase family. Type 1 subfamily.

Its subcellular location is the cytoplasm. It catalyses the reaction CMP + ATP = CDP + ADP. The enzyme catalyses dCMP + ATP = dCDP + ADP. In Salinibacter ruber (strain DSM 13855 / M31), this protein is Cytidylate kinase.